The primary structure comprises 198 residues: UPF0312 protein PFL_5802 (198 aa).

The N-terminal stretch at 1–23 (MLKKTLAALAIGSAVLAAGQVMA) is a signal peptide.

Belongs to the UPF0312 family. Type 1 subfamily.

Its subcellular location is the periplasm. The polypeptide is UPF0312 protein PFL_5802 (Pseudomonas fluorescens (strain ATCC BAA-477 / NRRL B-23932 / Pf-5)).